We begin with the raw amino-acid sequence, 190 residues long: Anthranilate synthase component 2 (190 aa).

Residues 1 to 190 form the Glutamine amidotransferase type-1 domain; sequence MILLIDNYDS…ILQNFINCLN (190 aa). Residue 52 to 54 coordinates L-glutamine; sequence CPG. Cysteine 79 serves as the catalytic Nucleophile; for GATase activity. L-glutamine is bound by residues glutamine 83 and 129-130; that span reads SL. Active-site residues include histidine 169 and glutamate 171.

In terms of assembly, tetramer of two components I and two components II.

Its subcellular location is the plastid. The protein resides in the cyanelle. It catalyses the reaction chorismate + L-glutamine = anthranilate + pyruvate + L-glutamate + H(+). The protein operates within amino-acid biosynthesis; L-tryptophan biosynthesis; L-tryptophan from chorismate: step 1/5. The sequence is that of Anthranilate synthase component 2 (trpG) from Cyanophora paradoxa.